A 303-amino-acid polypeptide reads, in one-letter code: Aspartate carbamoyltransferase catalytic subunit (303 aa).

Carbamoyl phosphate contacts are provided by Arg-51 and Thr-52. Lys-80 provides a ligand contact to L-aspartate. The carbamoyl phosphate site is built by Arg-101, His-129, and Gln-132. L-aspartate-binding residues include Arg-162 and Arg-221. Positions 260 and 261 each coordinate carbamoyl phosphate.

It belongs to the aspartate/ornithine carbamoyltransferase superfamily. ATCase family. Heterooligomer of catalytic and regulatory chains.

The enzyme catalyses carbamoyl phosphate + L-aspartate = N-carbamoyl-L-aspartate + phosphate + H(+). Its pathway is pyrimidine metabolism; UMP biosynthesis via de novo pathway; (S)-dihydroorotate from bicarbonate: step 2/3. Catalyzes the condensation of carbamoyl phosphate and aspartate to form carbamoyl aspartate and inorganic phosphate, the committed step in the de novo pyrimidine nucleotide biosynthesis pathway. This is Aspartate carbamoyltransferase catalytic subunit from Saccharolobus islandicus (strain M.14.25 / Kamchatka #1) (Sulfolobus islandicus).